The following is a 409-amino-acid chain: Probable beta-1,3-galactosyltransferase 3 (409 aa).

The chain crosses the membrane as a helical; Signal-anchor for type II membrane protein span at residues 20 to 42 (WTFLLCFGSFCFGILFTDRMWII).

This sequence belongs to the glycosyltransferase 31 family. Mn(2+) is required as a cofactor.

Its subcellular location is the golgi apparatus membrane. Its pathway is protein modification; protein glycosylation. Beta-1,3-galactosyltransferase that transfers galactose from UDP-galactose to substrates with a terminal glycosyl residue. This chain is Probable beta-1,3-galactosyltransferase 3 (B3GALT3), found in Arabidopsis thaliana (Mouse-ear cress).